A 353-amino-acid polypeptide reads, in one-letter code: Dimethylsulfoniopropionate lyase 2 (353 aa).

Residues Cys-125 and Cys-274 each act as proton donor/acceptor in the active site. The interval 326 to 353 is disordered; the sequence is DPNETDVSKGRPTKAEHRFGPEFEEMLQ. The span at 331–346 shows a compositional bias: basic and acidic residues; it reads DVSKGRPTKAEHRFGP.

This sequence belongs to the aspartate/glutamate racemases family. ALMA1 subfamily. Homotetramer.

It catalyses the reaction S,S-dimethyl-beta-propiothetin = acrylate + dimethyl sulfide + H(+). Its function is as follows. Mediates cleavage of dimethylsulfoniopropionate (DMSP) into dimethyl sulfide (DMS) and acrylate. DMS is the principal form by which sulfur is transported from oceans to the atmosphere and is a key component of the ocean sulfur cycle. This chain is Dimethylsulfoniopropionate lyase 2, found in Emiliania huxleyi (strain CCMP1516).